Here is a 239-residue protein sequence, read N- to C-terminus: THAP domain-containing protein 3 (239 aa).

The THAP-type zinc-finger motif lies at 1 to 82; sequence MPKSCAARQC…LKHNAVPTVF (82 aa). The disordered stretch occupies residues 84–177; that stretch reads FQDPTQQVRE…RRTPNKQPSD (94 aa). Ser-122 carries the phosphoserine modification. Positions 177–180 match the HCFC1-binding motif (HBM) motif; the sequence is DHSY.

As to quaternary structure, component of a THAP1/THAP3-HCFC1-OGT complex that contains at least, either THAP1 or THAP3, HCFC1 and OGT. Interacts directly with OGT and HCFC1 (via its HBM). As to expression, highly expressed in heart, skeletal muscle and placenta. Weaker expression in brain, kidney and liver.

In terms of biological role, component of a THAP1/THAP3-HCFC1-OGT complex that is required for the regulation of the transcriptional activity of RRM1. The polypeptide is THAP domain-containing protein 3 (THAP3) (Homo sapiens (Human)).